Consider the following 472-residue polypeptide: Inhibitor of Apoptosis OPG037 (472 aa).

ANK repeat units lie at residues 97 to 126 (DGNYPLHIASKINNNRIVAMLLTHGADPNA), 130 to 161 (HNKTPLYYLSGTDDEVIERINLLVQYGAKINN), 233 to 263 (DGNTPLHIVCSKTVKNVDIIDLLLPSTDVNK), 267 to 297 (FGDSPLTLLIKTLSPAHLINKLLSTSNVITD), 322 to 351 (YDSTDFKMAVEVGSIRCVKYLLDNDIICED), and 353 to 377 (MYYAVLSEYETMVDYLLFNHFSVDS).

This sequence belongs to the orthopoxvirus OPG037 protein family. As to quaternary structure, may interact with host caspase-9-Apaf-1 complex.

The protein localises to the host cytoplasm. Inhibits host apoptosis. Acts by associating with host apoptosome. This Homo sapiens (Human) protein is Inhibitor of Apoptosis OPG037 (OPG037).